The primary structure comprises 376 residues: Succinyl-diaminopimelate desuccinylase (376 aa).

His-66 lines the Zn(2+) pocket. The active site involves Asp-68. Residue Asp-99 participates in Zn(2+) binding. The active-site Proton acceptor is Glu-133. Zn(2+) contacts are provided by Glu-134, Glu-162, and His-348.

Belongs to the peptidase M20A family. DapE subfamily. As to quaternary structure, homodimer. Zn(2+) is required as a cofactor. The cofactor is Co(2+).

It carries out the reaction N-succinyl-(2S,6S)-2,6-diaminopimelate + H2O = (2S,6S)-2,6-diaminopimelate + succinate. It participates in amino-acid biosynthesis; L-lysine biosynthesis via DAP pathway; LL-2,6-diaminopimelate from (S)-tetrahydrodipicolinate (succinylase route): step 3/3. In terms of biological role, catalyzes the hydrolysis of N-succinyl-L,L-diaminopimelic acid (SDAP), forming succinate and LL-2,6-diaminopimelate (DAP), an intermediate involved in the bacterial biosynthesis of lysine and meso-diaminopimelic acid, an essential component of bacterial cell walls. The sequence is that of Succinyl-diaminopimelate desuccinylase from Nitrosococcus oceani (strain ATCC 19707 / BCRC 17464 / JCM 30415 / NCIMB 11848 / C-107).